Consider the following 284-residue polypeptide: Putative ABC transporter ATP-binding protein sll0385 (284 aa).

The region spanning 51–278 (IRVRELSFAY…QTLMESHGLE (228 aa)) is the ABC transporter domain. Position 84 to 91 (84 to 91 (GHNGCGKT)) interacts with ATP.

It belongs to the ABC transporter superfamily.

It is found in the cell inner membrane. Functionally, probably part of an ABC transporter complex. Responsible for energy coupling to the transport system. The chain is Putative ABC transporter ATP-binding protein sll0385 from Synechocystis sp. (strain ATCC 27184 / PCC 6803 / Kazusa).